The following is a 319-amino-acid chain: MADTATGSPTSHGHVSPFVEIARADWAALAPATHLPLRETELVQLRGIGDRLDMREVEDVYLPLSRLLNLYVTGTKKLHRDTSAFLGERAKSTPFIIGVAGSVAVGKSTVARLLREMLARWDDTPRVELVTTDGFLHPNAELERRGLMERKGFPESYDRRALLRFVTQVKSGVPEVRAPFYSHLAYDIVPGAEVVVRQPDVLIIEGLNVLQPAASGAKLAVSDLFDFSIYVDARTHDIAQWYEERFLSLQRGAFSNPRSYFHRYAELSPAEAVARARGIWSAINEPNLEQNIRPTRSRATLVLRKDADHSVANVLLRKL.

101–108 (GSVAVGKS) provides a ligand contact to ATP.

This sequence belongs to the prokaryotic pantothenate kinase family.

The protein localises to the cytoplasm. It carries out the reaction (R)-pantothenate + ATP = (R)-4'-phosphopantothenate + ADP + H(+). Its pathway is cofactor biosynthesis; coenzyme A biosynthesis; CoA from (R)-pantothenate: step 1/5. This chain is Pantothenate kinase, found in Clavibacter sepedonicus (Clavibacter michiganensis subsp. sepedonicus).